A 253-amino-acid polypeptide reads, in one-letter code: Imidazole glycerol phosphate synthase subunit HisF (253 aa).

Active-site residues include aspartate 11 and aspartate 130.

Belongs to the HisA/HisF family. In terms of assembly, heterodimer of HisH and HisF.

The protein resides in the cytoplasm. The catalysed reaction is 5-[(5-phospho-1-deoxy-D-ribulos-1-ylimino)methylamino]-1-(5-phospho-beta-D-ribosyl)imidazole-4-carboxamide + L-glutamine = D-erythro-1-(imidazol-4-yl)glycerol 3-phosphate + 5-amino-1-(5-phospho-beta-D-ribosyl)imidazole-4-carboxamide + L-glutamate + H(+). It functions in the pathway amino-acid biosynthesis; L-histidine biosynthesis; L-histidine from 5-phospho-alpha-D-ribose 1-diphosphate: step 5/9. Functionally, IGPS catalyzes the conversion of PRFAR and glutamine to IGP, AICAR and glutamate. The HisF subunit catalyzes the cyclization activity that produces IGP and AICAR from PRFAR using the ammonia provided by the HisH subunit. The polypeptide is Imidazole glycerol phosphate synthase subunit HisF (Cereibacter sphaeroides (strain KD131 / KCTC 12085) (Rhodobacter sphaeroides)).